Consider the following 504-residue polypeptide: Pyruvate kinase (504 aa).

Residue Arg53 coordinates substrate. K(+)-binding residues include Asn55, Ser57, Asp88, and Thr89. Position 55–58 (55–58 (NFSH)) interacts with ATP. Residues Arg95 and Lys181 each coordinate ATP. Glu246 contacts Mg(2+). The substrate site is built by Gly269, Asp270, and Thr302. Asp270 lines the Mg(2+) pocket.

This sequence belongs to the pyruvate kinase family. In terms of assembly, homotetramer. Requires Mg(2+) as cofactor. The cofactor is K(+).

The catalysed reaction is pyruvate + ATP = phosphoenolpyruvate + ADP + H(+). It functions in the pathway carbohydrate degradation; glycolysis; pyruvate from D-glyceraldehyde 3-phosphate: step 5/5. In Debaryomyces hansenii (strain ATCC 36239 / CBS 767 / BCRC 21394 / JCM 1990 / NBRC 0083 / IGC 2968) (Yeast), this protein is Pyruvate kinase (PYK1).